Reading from the N-terminus, the 131-residue chain is MKKTLLLNSVLSELIASLGHGDMVVIGDAGLPIPPETRRIDLALCRGIPPLLETVRVIASEMQVEKALIATETGQRSPHIRDGLGQLLPNTPFEEVSHEQLKALCRQARAVVRTGEYTPYANVILVAGVVF.

The active-site Proton donor is His-20. Substrate contacts are provided by residues Asp-28, His-98, and 120–122 (YAN).

The protein belongs to the RbsD / FucU family. RbsD subfamily. Homodecamer.

The protein localises to the cytoplasm. The enzyme catalyses beta-D-ribopyranose = beta-D-ribofuranose. It functions in the pathway carbohydrate metabolism; D-ribose degradation; D-ribose 5-phosphate from beta-D-ribopyranose: step 1/2. Its function is as follows. Catalyzes the interconversion of beta-pyran and beta-furan forms of D-ribose. The protein is D-ribose pyranase of Chloroflexus aggregans (strain MD-66 / DSM 9485).